A 384-amino-acid chain; its full sequence is 1-deoxy-D-xylulose 5-phosphate reductoisomerase (384 aa).

Thr-10, Gly-11, Ser-12, Ile-13, Arg-37, Asn-38, and Asn-124 together coordinate NADPH. Lys-125 lines the 1-deoxy-D-xylulose 5-phosphate pocket. Glu-126 serves as a coordination point for NADPH. Asp-150 lines the Mn(2+) pocket. 1-deoxy-D-xylulose 5-phosphate-binding residues include Ser-151, Glu-152, Ser-176, and His-199. Glu-152 lines the Mn(2+) pocket. Gly-205 contacts NADPH. Residues Ser-212, Asn-217, Lys-218, and Glu-221 each contribute to the 1-deoxy-D-xylulose 5-phosphate site. Position 221 (Glu-221) interacts with Mn(2+).

Belongs to the DXR family. Mg(2+) is required as a cofactor. It depends on Mn(2+) as a cofactor.

The enzyme catalyses 2-C-methyl-D-erythritol 4-phosphate + NADP(+) = 1-deoxy-D-xylulose 5-phosphate + NADPH + H(+). It participates in isoprenoid biosynthesis; isopentenyl diphosphate biosynthesis via DXP pathway; isopentenyl diphosphate from 1-deoxy-D-xylulose 5-phosphate: step 1/6. Its function is as follows. Catalyzes the NADPH-dependent rearrangement and reduction of 1-deoxy-D-xylulose-5-phosphate (DXP) to 2-C-methyl-D-erythritol 4-phosphate (MEP). This Clostridium perfringens (strain ATCC 13124 / DSM 756 / JCM 1290 / NCIMB 6125 / NCTC 8237 / Type A) protein is 1-deoxy-D-xylulose 5-phosphate reductoisomerase.